Here is a 547-residue protein sequence, read N- to C-terminus: DEAD-box ATP-dependent RNA helicase 31 (547 aa).

The segment covering 1–34 (MFDFGLSEDDSELGEVDEDDGPSGFEDDLFDDEG) has biased composition (acidic residues). The interval 1–74 (MFDFGLSEDD…HTRESGGGDS (74 aa)) is disordered. Over residues 53 to 70 (IKGEPIDQEGVVHTRESG) the composition is skewed to basic and acidic residues. A Q motif motif is present at residues 79 to 107 (TRFDECSLSPLTLKGVKAAGYERMTAVQE). The region spanning 110–293 (LPIILKGKDV…HIAMKRDLEF (184 aa)) is the Helicase ATP-binding domain. 123–130 (AKTGTGKT) provides a ligand contact to ATP. The DEAD box motif lies at 241 to 244 (DEAD). The Helicase C-terminal domain occupies 327-478 (LLTDHISENV…TKRKVEKALA (152 aa)).

The protein belongs to the DEAD box helicase family.

The catalysed reaction is ATP + H2O = ADP + phosphate + H(+). The polypeptide is DEAD-box ATP-dependent RNA helicase 31 (Oryza sativa subsp. japonica (Rice)).